Here is a 402-residue protein sequence, read N- to C-terminus: Argininosuccinate synthase (402 aa).

Residue 9–17 (AYSGGLDTS) coordinates ATP. Position 86 (Tyr86) interacts with L-citrulline. An ATP-binding site is contributed by Gly116. L-aspartate contacts are provided by Thr118, Asn122, and Asp123. Asn122 contributes to the L-citrulline binding site. L-citrulline-binding residues include Arg126, Ser174, Ser183, Glu259, and Tyr271.

Belongs to the argininosuccinate synthase family. Type 1 subfamily. Homotetramer.

It localises to the cytoplasm. The catalysed reaction is L-citrulline + L-aspartate + ATP = 2-(N(omega)-L-arginino)succinate + AMP + diphosphate + H(+). It functions in the pathway amino-acid biosynthesis; L-arginine biosynthesis; L-arginine from L-ornithine and carbamoyl phosphate: step 2/3. The sequence is that of Argininosuccinate synthase from Anoxybacillus flavithermus (strain DSM 21510 / WK1).